The following is a 1584-amino-acid chain: Pentafunctional AROM polypeptide (1584 aa).

Residues 1 to 384 are 3-dehydroquinate synthase; sequence MSQDTDVVSV…YEKHATVVSD (384 aa). NAD(+) is bound by residues 46–48, 83–86, 114–116, and aspartate 119; these read DTN, ETSK, and GGV. Arginine 130 contributes to the 7-phospho-2-dehydro-3-deoxy-D-arabino-heptonate binding site. Position 139-140 (139-140) interacts with NAD(+); the sequence is TT. Positions 146 and 152 each coordinate 7-phospho-2-dehydro-3-deoxy-D-arabino-heptonate. Lysine 161 is an NAD(+) binding site. A 7-phospho-2-dehydro-3-deoxy-D-arabino-heptonate-binding site is contributed by asparagine 162. NAD(+) contacts are provided by residues 179–182 and asparagine 190; that span reads FLET. Glutamate 194 contributes to the Zn(2+) binding site. Residues 194–197 and lysine 250 contribute to the 7-phospho-2-dehydro-3-deoxy-D-arabino-heptonate site; that span reads EVIK. Glutamate 260 acts as the Proton acceptor; for 3-dehydroquinate synthase activity in catalysis. 7-phospho-2-dehydro-3-deoxy-D-arabino-heptonate-binding positions include 264-268 and histidine 271; that span reads RNLLN. Histidine 271 is a Zn(2+) binding site. Histidine 275 acts as the Proton acceptor; for 3-dehydroquinate synthase activity in catalysis. 7-phospho-2-dehydro-3-deoxy-D-arabino-heptonate is bound by residues histidine 287 and lysine 356. Histidine 287 is a binding site for Zn(2+). The segment at 397–843 is EPSP synthase; the sequence is VSPFDNSVSD…WDVLRNSFKI (447 aa). The active-site For EPSP synthase activity is the cysteine 825. The shikimate kinase stretch occupies residues 863–1058; the sequence is RASVILIGMR…IQKPHSFFLS (196 aa). 870-877 contacts ATP; the sequence is GMRGAGKT. Residues 1059–1280 are 3-dehydroquinase; the sequence is LTFPNINDAI…AAPGQLSVRQ (222 aa). Catalysis depends on histidine 1182, which acts as the Proton acceptor; for 3-dehydroquinate dehydratase activity. Lysine 1211 functions as the Schiff-base intermediate with substrate; for 3-dehydroquinate dehydratase activity in the catalytic mechanism. A shikimate dehydrogenase region spans residues 1293 to 1584; that stretch reads PKKFYLFGTP…YMVLCAKEHN (292 aa).

It in the N-terminal section; belongs to the sugar phosphate cyclases superfamily. Dehydroquinate synthase family. This sequence in the 2nd section; belongs to the EPSP synthase family. The protein in the 3rd section; belongs to the shikimate kinase family. In the 4th section; belongs to the type-I 3-dehydroquinase family. It in the C-terminal section; belongs to the shikimate dehydrogenase family. Homodimer. Requires Zn(2+) as cofactor.

Its subcellular location is the cytoplasm. It carries out the reaction 7-phospho-2-dehydro-3-deoxy-D-arabino-heptonate = 3-dehydroquinate + phosphate. It catalyses the reaction 3-dehydroquinate = 3-dehydroshikimate + H2O. The enzyme catalyses shikimate + NADP(+) = 3-dehydroshikimate + NADPH + H(+). The catalysed reaction is shikimate + ATP = 3-phosphoshikimate + ADP + H(+). It carries out the reaction 3-phosphoshikimate + phosphoenolpyruvate = 5-O-(1-carboxyvinyl)-3-phosphoshikimate + phosphate. The protein operates within metabolic intermediate biosynthesis; chorismate biosynthesis; chorismate from D-erythrose 4-phosphate and phosphoenolpyruvate: step 2/7. It participates in metabolic intermediate biosynthesis; chorismate biosynthesis; chorismate from D-erythrose 4-phosphate and phosphoenolpyruvate: step 3/7. It functions in the pathway metabolic intermediate biosynthesis; chorismate biosynthesis; chorismate from D-erythrose 4-phosphate and phosphoenolpyruvate: step 4/7. Its pathway is metabolic intermediate biosynthesis; chorismate biosynthesis; chorismate from D-erythrose 4-phosphate and phosphoenolpyruvate: step 5/7. The protein operates within metabolic intermediate biosynthesis; chorismate biosynthesis; chorismate from D-erythrose 4-phosphate and phosphoenolpyruvate: step 6/7. Functionally, the AROM polypeptide catalyzes 5 consecutive enzymatic reactions in prechorismate polyaromatic amino acid biosynthesis. The chain is Pentafunctional AROM polypeptide from Schizosaccharomyces japonicus (strain yFS275 / FY16936) (Fission yeast).